The following is a 790-amino-acid chain: Penicillin-binding protein 1A (790 aa).

The Cytoplasmic portion of the chain corresponds to 1 to 6 (MYKSLL). The chain crosses the membrane as a helical; Signal-anchor for type II membrane protein span at residues 7–27 (FCLKIFVFLILVGCGITAYII). Residues 28-790 (YHYSRDLPDY…SKEDQSQEIY (763 aa)) lie on the Periplasmic side of the membrane. The tract at residues 49–220 (TRIYSRDGKL…SELNPERNYA (172 aa)) is transglycosylase. Catalysis depends on E87, which acts as the Proton donor; for transglycosylase activity. The transpeptidase stretch occupies residues 398–711 (DVIVVEAIKE…SNVVLPIFID (314 aa)). Catalysis depends on S457, which acts as the Acyl-ester intermediate; for transpeptidase activity.

The protein in the N-terminal section; belongs to the glycosyltransferase 51 family. In the C-terminal section; belongs to the transpeptidase family.

It is found in the cell inner membrane. The enzyme catalyses [GlcNAc-(1-&gt;4)-Mur2Ac(oyl-L-Ala-gamma-D-Glu-L-Lys-D-Ala-D-Ala)](n)-di-trans,octa-cis-undecaprenyl diphosphate + beta-D-GlcNAc-(1-&gt;4)-Mur2Ac(oyl-L-Ala-gamma-D-Glu-L-Lys-D-Ala-D-Ala)-di-trans,octa-cis-undecaprenyl diphosphate = [GlcNAc-(1-&gt;4)-Mur2Ac(oyl-L-Ala-gamma-D-Glu-L-Lys-D-Ala-D-Ala)](n+1)-di-trans,octa-cis-undecaprenyl diphosphate + di-trans,octa-cis-undecaprenyl diphosphate + H(+). The catalysed reaction is Preferential cleavage: (Ac)2-L-Lys-D-Ala-|-D-Ala. Also transpeptidation of peptidyl-alanyl moieties that are N-acyl substituents of D-alanine.. The protein operates within cell wall biogenesis; peptidoglycan biosynthesis. Its function is as follows. Cell wall formation. Synthesis of cross-linked peptidoglycan from the lipid intermediates. The enzyme has a penicillin-insensitive transglycosylase N-terminal domain (formation of linear glycan strands) and a penicillin-sensitive transpeptidase C-terminal domain (cross-linking of the peptide subunits). The polypeptide is Penicillin-binding protein 1A (mrcA) (Rickettsia conorii (strain ATCC VR-613 / Malish 7)).